A 324-amino-acid polypeptide reads, in one-letter code: Fructose-1,6-bisphosphatase class 1 (324 aa).

Residues Glu88, Asp107, Leu109, and Asp110 each contribute to the Mg(2+) site. Substrate is bound by residues 110–113, Asn199, and Lys265; that span reads DGSS. Residue Glu271 participates in Mg(2+) binding.

Belongs to the FBPase class 1 family. In terms of assembly, homotetramer. The cofactor is Mg(2+).

Its subcellular location is the cytoplasm. It catalyses the reaction beta-D-fructose 1,6-bisphosphate + H2O = beta-D-fructose 6-phosphate + phosphate. It functions in the pathway carbohydrate biosynthesis; gluconeogenesis. In Neisseria meningitidis serogroup A / serotype 4A (strain DSM 15465 / Z2491), this protein is Fructose-1,6-bisphosphatase class 1.